Here is a 203-residue protein sequence, read N- to C-terminus: Probable flagellin 1 (203 aa).

Positions 1-6 (MRRRRG) are excised as a propeptide.

This sequence belongs to the archaeal flagellin family.

It is found in the archaeal flagellum. Its function is as follows. Flagellin is the subunit protein which polymerizes to form the filaments of archaeal flagella. This is Probable flagellin 1 (flaB1) from Aeropyrum pernix (strain ATCC 700893 / DSM 11879 / JCM 9820 / NBRC 100138 / K1).